Here is a 904-residue protein sequence, read N- to C-terminus: E3 SUMO-protein ligase SIZ1 (904 aa).

The segment covering 1-13 (MINLEDYWEDETP) has biased composition (acidic residues). The tract at residues 1–21 (MINLEDYWEDETPGPDREPTN) is disordered. The SAP domain maps to 34 to 68 (MELLKVSELKDICRSVSFPVSGRKAVLQDLIRNFL). The disordered stretch occupies residues 122–170 (MEGPPTVQQQSPSVIRQSPTQRRKTSTTSSTSRAPPPTNPDASSSSSSF). Polar residues predominate over residues 127 to 136 (TVQQQSPSVI). Ser-132 bears the Phosphoserine mark. Residues 137 to 154 (RQSPTQRRKTSTTSSTSR) show a composition bias toward low complexity. The PINIT domain occupies 162-314 (DASSSSSSFA…KLFGYIVEMI (153 aa)). The SP-RING-type zinc finger occupies 344–431 (EDEEMGLTTT…LQNCQKNVEQ (88 aa)). Residues Cys-377, His-379, Cys-400, and Cys-403 each coordinate Zn(2+). 3 disordered regions span residues 443–584 (ILED…DDDR), 596–616 (STNTDILTEKGSSAPSRTLDP), and 672–733 (SPDV…ISDS). The span at 444 to 454 (LEDDDDSDSDS) shows a compositional bias: acidic residues. The span at 501–511 (NNHDDSNRHSN) shows a compositional bias: basic and acidic residues. The segment covering 512 to 553 (DNNNNSIKNNDSHNKNNNNNNNNNNNNNDNNNSIENNDSNSN) has biased composition (low complexity). Polar residues-rich tracts occupy residues 561–574 (RSNTPSHNHTKNLM), 596–611 (STNTDILTEKGSSAPS), and 672–683 (SPDVSVSSPTPR). Residues 684-699 (NTASNASSSALSTPPL) are compositionally biased toward low complexity. The span at 721–733 (INSNSYTASISDS) shows a compositional bias: polar residues. At Ser-794 the chain carries Phosphoserine. The required for localization at the bud neck stretch occupies residues 794–904 (SLPTTEAITR…QDYGKKYNSG (111 aa)). The span at 877 to 894 (RQLSNTSSTSPIMGTWKT) shows a compositional bias: polar residues. Residues 877-904 (RQLSNTSSTSPIMGTWKTQDYGKKYNSG) are disordered.

The protein belongs to the PIAS family. In terms of assembly, interacts with UBC9 and CDC3. Post-translationally, phosphorylated in early M-phase. In terms of processing, autosumoylated upon ethanol stress.

It localises to the cytoplasm. The protein localises to the nucleus. It is found in the bud neck. Its pathway is protein modification; protein sumoylation. Functionally, acts as an E3 ligase mediating SUMO/Smt3 attachment to septins and PCNA. May be involved in chromosome maintenance. The polypeptide is E3 SUMO-protein ligase SIZ1 (SIZ1) (Saccharomyces cerevisiae (strain ATCC 204508 / S288c) (Baker's yeast)).